The following is a 324-amino-acid chain: MLEQGLLVTAGVAFLISVALSPLFIPFLRKLKFGQSIRDEGPKSHQKKSGTPTMGGIVIYVSMMVTSLIMAIKFNHLGAEVSLLLLVTFGYGLIGFLDDYIKVVKKRNLGLTSKQKLVGQLVIAIAFFFIGKGQAFHTYIMIPGTDVKFELGWAYFVLVLFMLIGGSNAVNLTDGLDGLLSGTAAIAFGAFSIIAVAQEQFGVAIFCMAVVGAVLGFLVFNANPAEVFMGDTGSLALGGAIAAVAILLKQELLLVIIGGVFVMETLSVIIQVISFKTTGKRVFKMSPLHHHYELCGWSEWRVVVTFWSVGFLLAVLGIYIGVWM.

The next 10 membrane-spanning stretches (helical) occupy residues 5-25, 52-72, 77-97, 122-142, 149-169, 176-196, 201-221, 227-247, 253-273, and 302-322; these read GLLV…PLFI, PTMG…IMAI, LGAE…IGFL, VIAI…YIMI, FELG…GSNA, LDGL…IIAV, FGVA…LVFN, VFMG…VAIL, LLVI…IQVI, and VVVT…YIGV.

It belongs to the glycosyltransferase 4 family. MraY subfamily. Requires Mg(2+) as cofactor.

The protein resides in the cell membrane. It carries out the reaction UDP-N-acetyl-alpha-D-muramoyl-L-alanyl-gamma-D-glutamyl-meso-2,6-diaminopimeloyl-D-alanyl-D-alanine + di-trans,octa-cis-undecaprenyl phosphate = di-trans,octa-cis-undecaprenyl diphospho-N-acetyl-alpha-D-muramoyl-L-alanyl-D-glutamyl-meso-2,6-diaminopimeloyl-D-alanyl-D-alanine + UMP. Its pathway is cell wall biogenesis; peptidoglycan biosynthesis. Its function is as follows. Catalyzes the initial step of the lipid cycle reactions in the biosynthesis of the cell wall peptidoglycan: transfers peptidoglycan precursor phospho-MurNAc-pentapeptide from UDP-MurNAc-pentapeptide onto the lipid carrier undecaprenyl phosphate, yielding undecaprenyl-pyrophosphoryl-MurNAc-pentapeptide, known as lipid I. The sequence is that of Phospho-N-acetylmuramoyl-pentapeptide-transferase from Bacillus anthracis.